A 61-amino-acid chain; its full sequence is Sec-independent protein translocase protein TatA (61 aa).

Residues 2–22 (GLSGISPLSLLLILAIIVALF) traverse the membrane as a helical segment.

Belongs to the TatA/E family. As to quaternary structure, the Tat system comprises two distinct complexes: a TatABC complex, containing multiple copies of TatA, TatB and TatC subunits, and a separate TatA complex, containing only TatA subunits. Substrates initially bind to the TatABC complex, which probably triggers association of the separate TatA complex to form the active translocon.

The protein localises to the cell inner membrane. In terms of biological role, part of the twin-arginine translocation (Tat) system that transports large folded proteins containing a characteristic twin-arginine motif in their signal peptide across membranes. TatA could form the protein-conducting channel of the Tat system. In Legionella pneumophila (strain Paris), this protein is Sec-independent protein translocase protein TatA.